A 412-amino-acid polypeptide reads, in one-letter code: Probable ribonuclease FAU-1 (412 aa).

This sequence belongs to the FAU-1 family.

In terms of biological role, probable RNase involved in rRNA stability through maturation and/or degradation of precursor rRNAs. Binds to RNA in loop regions with AU-rich sequences. The chain is Probable ribonuclease FAU-1 from Sulfurisphaera tokodaii (strain DSM 16993 / JCM 10545 / NBRC 100140 / 7) (Sulfolobus tokodaii).